The sequence spans 197 residues: Holliday junction branch migration complex subunit RuvA (197 aa).

The interval M1 to S64 is domain I. Residues S65–T143 are domain II. Residues N144–E153 form a flexible linker region. Positions E153–V197 are domain III.

This sequence belongs to the RuvA family. Homotetramer. Forms an RuvA(8)-RuvB(12)-Holliday junction (HJ) complex. HJ DNA is sandwiched between 2 RuvA tetramers; dsDNA enters through RuvA and exits via RuvB. An RuvB hexamer assembles on each DNA strand where it exits the tetramer. Each RuvB hexamer is contacted by two RuvA subunits (via domain III) on 2 adjacent RuvB subunits; this complex drives branch migration. In the full resolvosome a probable DNA-RuvA(4)-RuvB(12)-RuvC(2) complex forms which resolves the HJ.

The protein resides in the cytoplasm. Functionally, the RuvA-RuvB-RuvC complex processes Holliday junction (HJ) DNA during genetic recombination and DNA repair, while the RuvA-RuvB complex plays an important role in the rescue of blocked DNA replication forks via replication fork reversal (RFR). RuvA specifically binds to HJ cruciform DNA, conferring on it an open structure. The RuvB hexamer acts as an ATP-dependent pump, pulling dsDNA into and through the RuvAB complex. HJ branch migration allows RuvC to scan DNA until it finds its consensus sequence, where it cleaves and resolves the cruciform DNA. This Herpetosiphon aurantiacus (strain ATCC 23779 / DSM 785 / 114-95) protein is Holliday junction branch migration complex subunit RuvA.